The following is a 553-amino-acid chain: Zinc finger protein 324A (553 aa).

One can recognise a KRAB domain in the interval M1–T72. The Nuclear localization signal signature appears at P130–K135. The segment at G186–H221 is disordered. C2H2-type zinc fingers lie at residues F257 to H279, Y285 to H307, Y313 to H335, F341 to H363, Y369 to H391, F397 to H419, F425 to H447, F453 to H475, and F481 to H503. A disordered region spans residues I502–V553.

This sequence belongs to the krueppel C2H2-type zinc-finger protein family. As to expression, expressed at high levels in the spleen, thymus, and PBMC, at low levels in the prostate, ovary, small intestine, colon (mucosal lining), placenta, lung, and pancreas, and very weakly expressed in the liver and kidney.

Its subcellular location is the nucleus. May be involved in transcriptional regulation. May be involved in regulation of cell proliferation. This chain is Zinc finger protein 324A (ZNF324), found in Homo sapiens (Human).